The following is a 400-amino-acid chain: 1-deoxy-D-xylulose 5-phosphate reductoisomerase (400 aa).

NADPH is bound by residues T17, G18, S19, I20, and N131. K132 provides a ligand contact to 1-deoxy-D-xylulose 5-phosphate. E133 is an NADPH binding site. D157 contributes to the Mn(2+) binding site. The 1-deoxy-D-xylulose 5-phosphate site is built by S158, E159, S188, and H211. Residue E159 participates in Mn(2+) binding. G217 contributes to the NADPH binding site. Positions 224, 229, 230, and 233 each coordinate 1-deoxy-D-xylulose 5-phosphate. E233 is a binding site for Mn(2+).

Belongs to the DXR family. Mg(2+) is required as a cofactor. Mn(2+) serves as cofactor.

The enzyme catalyses 2-C-methyl-D-erythritol 4-phosphate + NADP(+) = 1-deoxy-D-xylulose 5-phosphate + NADPH + H(+). Its pathway is isoprenoid biosynthesis; isopentenyl diphosphate biosynthesis via DXP pathway; isopentenyl diphosphate from 1-deoxy-D-xylulose 5-phosphate: step 1/6. Its function is as follows. Catalyzes the NADPH-dependent rearrangement and reduction of 1-deoxy-D-xylulose-5-phosphate (DXP) to 2-C-methyl-D-erythritol 4-phosphate (MEP). The polypeptide is 1-deoxy-D-xylulose 5-phosphate reductoisomerase (Pseudomonas putida (strain ATCC 47054 / DSM 6125 / CFBP 8728 / NCIMB 11950 / KT2440)).